The sequence spans 277 residues: uncharacterized protein (277 aa).

A disordered region spans residues 232–262; that stretch reads NNESAICESQASSKEDERSDKTTSSSKKKSF. Over residues 234–243 the composition is skewed to polar residues; that stretch reads ESAICESQAS.

It is found in the cytoplasm. The protein resides in the nucleus. This is an uncharacterized protein from Schizosaccharomyces pombe (strain 972 / ATCC 24843) (Fission yeast).